Consider the following 219-residue polypeptide: Bacterial microcompartment shell protein EutL (219 aa).

BMC circularly permuted domains lie at 1 to 113 (MPAL…GAAF) and 114 to 215 (QWAN…ARNP). The ethanolamine site is built by Asp45, Asp46, Glu83, and Phe113. The tract at residues 45–46 (DD) is part of the acidic patch lining the small pore. Position 157 (Glu157) interacts with Zn(2+). Position 183 to 185 (183 to 185 (TNY)) interacts with ethanolamine.

Belongs to the EutL/PduB family. Homotrimerizes to form a pseudohexamer. The trimers form a two-dimensional array about 37 Angstroms thick.

Its subcellular location is the bacterial microcompartment. Its pathway is amine and polyamine degradation; ethanolamine degradation. A component of the bacterial microcompartment (BMC) shell dedicated to ethanolamine degradation. Two crystal forms have been seen; a form with a closed central pore that has 3 very small (1.1-2.2 Angstroms) channels per trimer lined by acidic and aromatic residues. A form with a large central pore (8-12 Angstroms) has also been seen; this is probably a functional pore which allows molecules to enter and exit the BMC in a selective, gated manner. Another group only sees the central pore in the presence of Zn(2+); soaking crystals in ZnCl(2) leads to dramatic conformational changes that open a central pore of about 12 Angstroms. Whether Zn(2+) binding is physiologically relevant is unclear, however it suggests a gating mechanism exists. Ethanolamine-binding by the small channels has been hypothesized to stabilize the EutL central pore in a closed (non-transporting) state. An open pore is thought to be large enough to transport ATP and/or cobalamin. The protein is Bacterial microcompartment shell protein EutL (eutL) of Escherichia coli (strain K12).